A 103-amino-acid polypeptide reads, in one-letter code: Conantokin-Br (103 aa).

An N-terminal signal peptide occupies residues 1-21; that stretch reads MQLYTYLYLLVPLVTFHLILG. Positions 22–79 are excised as a propeptide; it reads TGTLDHGGALTERRSTDATALKPEPVLQKSAARSTDDNGKDRLTQMKRILKKRGKNAR. The disordered stretch occupies residues 34 to 64; the sequence is RRSTDATALKPEPVLQKSAARSTDDNGKDRL. Positions 55–64 are enriched in basic and acidic residues; the sequence is STDDNGKDRL. Glu82, Glu83, Glu89, and Glu93 each carry 4-carboxyglutamate. Residues Glu89 and Glu93 each coordinate a divalent metal cation.

Belongs to the conotoxin B superfamily. Requires Ca(2+) as cofactor. Mg(2+) is required as a cofactor. In terms of tissue distribution, expressed by the venom duct.

Its subcellular location is the secreted. Functionally, conantokins inhibit N-methyl-D-aspartate (NMDA) receptors. This toxin inhibits NR2 subunits N-methyl-D-aspartate (NMDA) receptor-mediated calcium influx in central nervous system neurons in the following order of preference: NR2B/GRIN2B (IC(50)=0.14 uM), NR2D/GRIN2D (IC(50)=0.31 uM), NR2A/GRIN2A (IC(50)=0.68 uM) and NR2C/GRIN2A (IC(50)=4.9 uM), when tested on rat receptors. This Conus sulcatus (Sulcate cone) protein is Conantokin-Br.